The chain runs to 519 residues: 6-phosphofructo-2-kinase/fructose-2,6-bisphosphatase 2 (519 aa).

Over residues 1–17 (MSENSTFSTEDSCNSSY) the composition is skewed to polar residues. The disordered stretch occupies residues 1-22 (MSENSTFSTEDSCNSSYKPHAS). N-acetylserine is present on Ser-2. The 6-phosphofructo-2-kinase stretch occupies residues 2-251 (SENSTFSTED…VYYLMNIHVH (250 aa)). Ser-32 is modified (phosphoserine; by PKA). 48–56 (GLPARGKTY) is an ATP binding site. 2 residues coordinate beta-D-fructose 6-phosphate: Arg-81 and Arg-105. Asp-131 is an active-site residue. Residues Thr-133 and Arg-139 each contribute to the beta-D-fructose 6-phosphate site. The active site involves Cys-161. 170 to 175 (NILEVK) lines the ATP pocket. Residues Lys-175, Arg-196, and Tyr-200 each coordinate beta-D-fructose 6-phosphate. The segment at 252 to 519 (PRTIYLCRHG…PKTQVSIPVV (268 aa)) is fructose-2,6-bisphosphatase. Arg-259 is a binding site for beta-D-fructose 2,6-bisphosphate. Residue His-260 is the Tele-phosphohistidine intermediate of the active site. Residues Asn-266 and Gly-272 each coordinate beta-D-fructose 2,6-bisphosphate. The Proton donor/acceptor role is filled by Glu-329. Residues Tyr-340, Arg-354, Lys-358, Tyr-369, Gln-395, and Arg-399 each contribute to the beta-D-fructose 2,6-bisphosphate site. 351 to 354 (FALR) lines the ATP pocket. Residues 395-399 (QAVMR) and Tyr-431 contribute to the ATP site. Positions 448 to 493 (HRDKPTHNFPKSQTPVRMRRNSFTPLSSSNTIRRPRNYSVGSRPLK) are disordered. The span at 456-479 (FPKSQTPVRMRRNSFTPLSSSNTI) shows a compositional bias: polar residues. Ser-469 bears the Phosphoserine mark. Thr-471 is modified (phosphothreonine). Thr-478 carries the post-translational modification Phosphothreonine; by PKC. Residues Ser-486 and Ser-496 each carry the phosphoserine modification. Residues 500 to 519 (ALDMQEGADQPKTQVSIPVV) form a disordered region. The segment covering 510 to 519 (PKTQVSIPVV) has biased composition (polar residues).

It in the C-terminal section; belongs to the phosphoglycerate mutase family. As to quaternary structure, homodimer. Forms a heterodimer with PFKFB3. In terms of processing, phosphorylation by AMPK stimulates activity. As to expression, highest levels in kidney; also found in heart, brain, spleen, lung, liver, skeletal muscle and testis.

The enzyme catalyses beta-D-fructose 2,6-bisphosphate + H2O = beta-D-fructose 6-phosphate + phosphate. It catalyses the reaction beta-D-fructose 6-phosphate + ATP = beta-D-fructose 2,6-bisphosphate + ADP + H(+). Its activity is regulated as follows. Phosphorylation results in the activation of the kinase activity. Its function is as follows. Synthesis and degradation of fructose 2,6-bisphosphate. In Mus musculus (Mouse), this protein is 6-phosphofructo-2-kinase/fructose-2,6-bisphosphatase 2 (Pfkfb2).